The sequence spans 367 residues: Succinyl-diaminopimelate desuccinylase (367 aa).

Histidine 67 serves as a coordination point for Zn(2+). Residue aspartate 69 is part of the active site. Residue aspartate 98 participates in Zn(2+) binding. Glutamate 128 (proton acceptor) is an active-site residue. Positions 129, 157, and 342 each coordinate Zn(2+).

It belongs to the peptidase M20A family. DapE subfamily. In terms of assembly, homodimer. Requires Zn(2+) as cofactor. Co(2+) serves as cofactor.

The enzyme catalyses N-succinyl-(2S,6S)-2,6-diaminopimelate + H2O = (2S,6S)-2,6-diaminopimelate + succinate. It functions in the pathway amino-acid biosynthesis; L-lysine biosynthesis via DAP pathway; LL-2,6-diaminopimelate from (S)-tetrahydrodipicolinate (succinylase route): step 3/3. Catalyzes the hydrolysis of N-succinyl-L,L-diaminopimelic acid (SDAP), forming succinate and LL-2,6-diaminopimelate (DAP), an intermediate involved in the bacterial biosynthesis of lysine and meso-diaminopimelic acid, an essential component of bacterial cell walls. In Campylobacter hominis (strain ATCC BAA-381 / DSM 21671 / CCUG 45161 / LMG 19568 / NCTC 13146 / CH001A), this protein is Succinyl-diaminopimelate desuccinylase.